The primary structure comprises 289 residues: ATP synthase subunit a (289 aa).

6 helical membrane passes run 43 to 63, 104 to 124, 160 to 180, 193 to 213, 232 to 252, and 259 to 279; these read AFHL…LLIF, IAPL…VDLI, FCVF…GGFI, IFVQ…TLIA, VFIL…GLGV, and AVFH…LTIV.

This sequence belongs to the ATPase A chain family. As to quaternary structure, F-type ATPases have 2 components, CF(1) - the catalytic core - and CF(0) - the membrane proton channel. CF(1) has five subunits: alpha(3), beta(3), gamma(1), delta(1), epsilon(1). CF(0) has three main subunits: a(1), b(2) and c(9-12). The alpha and beta chains form an alternating ring which encloses part of the gamma chain. CF(1) is attached to CF(0) by a central stalk formed by the gamma and epsilon chains, while a peripheral stalk is formed by the delta and b chains.

The protein localises to the cell inner membrane. Functionally, key component of the proton channel; it plays a direct role in the translocation of protons across the membrane. The chain is ATP synthase subunit a from Pseudomonas putida (strain ATCC 47054 / DSM 6125 / CFBP 8728 / NCIMB 11950 / KT2440).